The sequence spans 358 residues: Isopentenyl-diphosphate delta-isomerase (358 aa).

12–13 (RK) contributes to the substrate binding site. FMN-binding positions include 69-71 (AMT), Ser99, and Asn128. Gln158 contacts substrate. Glu159 is a Mg(2+) binding site. Residues Lys190, Thr220, 267–269 (GIR), and 288–289 (AG) each bind FMN.

Belongs to the IPP isomerase type 2 family. Homooctamer. Dimer of tetramers. The cofactor is FMN. Requires NADPH as cofactor. Mg(2+) serves as cofactor.

The protein localises to the cytoplasm. The catalysed reaction is isopentenyl diphosphate = dimethylallyl diphosphate. Functionally, involved in the biosynthesis of isoprenoids. Catalyzes the 1,3-allylic rearrangement of the homoallylic substrate isopentenyl (IPP) to its allylic isomer, dimethylallyl diphosphate (DMAPP). This is Isopentenyl-diphosphate delta-isomerase from Listeria monocytogenes serotype 4b (strain CLIP80459).